Reading from the N-terminus, the 213-residue chain is High frequency lysogenization protein HflD homolog (213 aa).

The protein belongs to the HflD family.

The protein resides in the cytoplasm. The protein localises to the cell inner membrane. The protein is High frequency lysogenization protein HflD homolog of Alcanivorax borkumensis (strain ATCC 700651 / DSM 11573 / NCIMB 13689 / SK2).